Here is a 146-residue protein sequence, read N- to C-terminus: Regulator of ribonuclease activity B (146 aa).

The tract at residues 110 to 146 is disordered; sequence WGTYFEDPDGEEEEGDEFDQDDEDGPADRDEVPATRH. A compositionally biased stretch (acidic residues) spans 115 to 134; it reads EDPDGEEEEGDEFDQDDEDG. A compositionally biased stretch (basic and acidic residues) spans 135–146; the sequence is PADRDEVPATRH.

This sequence belongs to the RraB family. Interacts with the C-terminal region of Rne.

Its subcellular location is the cytoplasm. In terms of biological role, globally modulates RNA abundance by binding to RNase E (Rne) and regulating its endonucleolytic activity. Can modulate Rne action in a substrate-dependent manner by altering the composition of the degradosome. The protein is Regulator of ribonuclease activity B of Sodalis glossinidius (strain morsitans).